Here is a 118-residue protein sequence, read N- to C-terminus: Large ribosomal subunit protein bL20 (118 aa).

Belongs to the bacterial ribosomal protein bL20 family.

Its function is as follows. Binds directly to 23S ribosomal RNA and is necessary for the in vitro assembly process of the 50S ribosomal subunit. It is not involved in the protein synthesizing functions of that subunit. This is Large ribosomal subunit protein bL20 from Psychrobacter arcticus (strain DSM 17307 / VKM B-2377 / 273-4).